We begin with the raw amino-acid sequence, 261 residues long: Cytochrome c oxidase subunit 3 (261 aa).

Over 1–15 (MTHQTHAYHMVNPSP) the chain is Mitochondrial matrix. A helical transmembrane segment spans residues 16-34 (WPLTGALSALLMTSGLTMW). Topologically, residues 35-40 (FHFNSM) are mitochondrial intermembrane. Residues 41 to 66 (LLLSLGLLTNTLTMYQWWRDIIREST) traverse the membrane as a helical segment. The Mitochondrial matrix segment spans residues 67–72 (FQGHHT). Residues 73–105 (SVVQKGLRYGMILFIISEVLFFTGFFWAFYHSS) form a helical membrane-spanning segment. Residues 106–128 (LAPTPELGGCWPPTGIHPLNPLE) are Mitochondrial intermembrane-facing. Residues 129 to 152 (VPLLNTSILLASGVSITWAHHSLM) traverse the membrane as a helical segment. Residues 153 to 155 (EGD) lie on the Mitochondrial matrix side of the membrane. A helical transmembrane segment spans residues 156 to 183 (RKHMIQALSITIALGVYFTLLQASEYYE). The Mitochondrial intermembrane segment spans residues 184 to 190 (APFTISD). A helical membrane pass occupies residues 191 to 223 (GVYGSTFFVATGFHGLHVIIGSTFLAVCLLRQL). At 224–232 (KFHFTSNHH) the chain is on the mitochondrial matrix side. A helical transmembrane segment spans residues 233–256 (FGFEAAAWYWHFVDVVWLFLYVSI). The Mitochondrial intermembrane portion of the chain corresponds to 257–261 (YWWGS).

This sequence belongs to the cytochrome c oxidase subunit 3 family. Component of the cytochrome c oxidase (complex IV, CIV), a multisubunit enzyme composed of 14 subunits. The complex is composed of a catalytic core of 3 subunits MT-CO1, MT-CO2 and MT-CO3, encoded in the mitochondrial DNA, and 11 supernumerary subunits COX4I, COX5A, COX5B, COX6A, COX6B, COX6C, COX7A, COX7B, COX7C, COX8 and NDUFA4, which are encoded in the nuclear genome. The complex exists as a monomer or a dimer and forms supercomplexes (SCs) in the inner mitochondrial membrane with NADH-ubiquinone oxidoreductase (complex I, CI) and ubiquinol-cytochrome c oxidoreductase (cytochrome b-c1 complex, complex III, CIII), resulting in different assemblies (supercomplex SCI(1)III(2)IV(1) and megacomplex MCI(2)III(2)IV(2)).

It localises to the mitochondrion inner membrane. It carries out the reaction 4 Fe(II)-[cytochrome c] + O2 + 8 H(+)(in) = 4 Fe(III)-[cytochrome c] + 2 H2O + 4 H(+)(out). Functionally, component of the cytochrome c oxidase, the last enzyme in the mitochondrial electron transport chain which drives oxidative phosphorylation. The respiratory chain contains 3 multisubunit complexes succinate dehydrogenase (complex II, CII), ubiquinol-cytochrome c oxidoreductase (cytochrome b-c1 complex, complex III, CIII) and cytochrome c oxidase (complex IV, CIV), that cooperate to transfer electrons derived from NADH and succinate to molecular oxygen, creating an electrochemical gradient over the inner membrane that drives transmembrane transport and the ATP synthase. Cytochrome c oxidase is the component of the respiratory chain that catalyzes the reduction of oxygen to water. Electrons originating from reduced cytochrome c in the intermembrane space (IMS) are transferred via the dinuclear copper A center (CU(A)) of subunit 2 and heme A of subunit 1 to the active site in subunit 1, a binuclear center (BNC) formed by heme A3 and copper B (CU(B)). The BNC reduces molecular oxygen to 2 water molecules using 4 electrons from cytochrome c in the IMS and 4 protons from the mitochondrial matrix. The chain is Cytochrome c oxidase subunit 3 (MT-CO3) from Sus scrofa (Pig).